Consider the following 185-residue polypeptide: Peptidyl-tRNA hydrolase (185 aa).

Tyr14 lines the tRNA pocket. The active-site Proton acceptor is the His19. TRNA is bound by residues Phe64, Asn66, and Asn112.

The protein belongs to the PTH family. In terms of assembly, monomer.

It localises to the cytoplasm. The enzyme catalyses an N-acyl-L-alpha-aminoacyl-tRNA + H2O = an N-acyl-L-amino acid + a tRNA + H(+). Its function is as follows. Hydrolyzes ribosome-free peptidyl-tRNAs (with 1 or more amino acids incorporated), which drop off the ribosome during protein synthesis, or as a result of ribosome stalling. Catalyzes the release of premature peptidyl moieties from peptidyl-tRNA molecules trapped in stalled 50S ribosomal subunits, and thus maintains levels of free tRNAs and 50S ribosomes. The chain is Peptidyl-tRNA hydrolase from Alkaliphilus oremlandii (strain OhILAs) (Clostridium oremlandii (strain OhILAs)).